A 123-amino-acid polypeptide reads, in one-letter code: UPF0102 protein Psyr_4114 (123 aa).

Belongs to the UPF0102 family.

The polypeptide is UPF0102 protein Psyr_4114 (Pseudomonas syringae pv. syringae (strain B728a)).